The following is a 213-amino-acid chain: Pyrrolidone-carboxylate peptidase (213 aa).

Active-site residues include Glu-78, Cys-141, and His-165.

It belongs to the peptidase C15 family. As to quaternary structure, homotetramer.

The protein localises to the cytoplasm. It carries out the reaction Release of an N-terminal pyroglutamyl group from a polypeptide, the second amino acid generally not being Pro.. Its function is as follows. Removes 5-oxoproline from various penultimate amino acid residues except L-proline. The sequence is that of Pyrrolidone-carboxylate peptidase from Staphylococcus carnosus (strain TM300).